Consider the following 226-residue polypeptide: Putative DNA repair protein recA homolog 4 (226 aa).

41-48 is an ATP binding site; it reads GPEASGKT.

Belongs to the RecA family.

It localises to the cytoplasm. Functionally, involved in recombination ability and DNA strand transfer activity. This is Putative DNA repair protein recA homolog 4 from Arabidopsis thaliana (Mouse-ear cress).